The primary structure comprises 418 residues: MHIFDELKERGLIFQTTDEEALRKALEEGQVSYYTGYDPTADSLHLGHLVAILTSRRLQLAGHKPYALVGGATGLIGDPSFKDAERSLQTKDTVDGWVKSIQGQLSRFLDFENGENKAVMVNNYDWFGSISFIDFLRDIGKYFTVNYMMSKESVKKRIETGISYTEFAYQIMQGYDFFVLNQDHNVTLQIGGSDQWGNMTAGTELLRRKADKTGHVITVPLITDATGKKFGKSEGNAVWLNPEKTSPYEMYQFWMNVMDADAVRFLKIFTFLSLDEIEDIRKQFEAAPHERLAQKVLAREVVTLVHGEEAYKEALNITEQLFAGNIKNLSVKELKQGLRGVPNYQVQADENNNIVELLVSSGIVNSKRQAREDVQNGAIYVNGDRIQDLDYVLSDADKLENELTVIRRGKKKYFVLTY.

Tyr34 serves as a coordination point for L-tyrosine. The 'HIGH' region signature appears at 39 to 48 (PTADSLHLGH). Residues Tyr169 and Gln173 each coordinate L-tyrosine. Positions 229–233 (KFGKS) match the 'KMSKS' region motif. Residue Lys232 coordinates ATP. Residues 352 to 418 (NNIVELLVSS…GKKKYFVLTY (67 aa)) form the S4 RNA-binding domain.

Belongs to the class-I aminoacyl-tRNA synthetase family. TyrS type 1 subfamily. In terms of assembly, homodimer.

Its subcellular location is the cytoplasm. It carries out the reaction tRNA(Tyr) + L-tyrosine + ATP = L-tyrosyl-tRNA(Tyr) + AMP + diphosphate + H(+). In terms of biological role, catalyzes the attachment of tyrosine to tRNA(Tyr) in a two-step reaction: tyrosine is first activated by ATP to form Tyr-AMP and then transferred to the acceptor end of tRNA(Tyr). The protein is Tyrosine--tRNA ligase of Streptococcus pneumoniae serotype 19F (strain G54).